A 481-amino-acid chain; its full sequence is ATP synthase subunit beta, chloroplastic (481 aa).

Gly161–Thr168 contacts ATP.

This sequence belongs to the ATPase alpha/beta chains family. F-type ATPases have 2 components, CF(1) - the catalytic core - and CF(0) - the membrane proton channel. CF(1) has five subunits: alpha(3), beta(3), gamma(1), delta(1), epsilon(1). CF(0) has four main subunits: a(1), b(1), b'(1) and c(9-12).

The protein resides in the plastid. The protein localises to the chloroplast thylakoid membrane. The enzyme catalyses ATP + H2O + 4 H(+)(in) = ADP + phosphate + 5 H(+)(out). Functionally, produces ATP from ADP in the presence of a proton gradient across the membrane. The catalytic sites are hosted primarily by the beta subunits. The chain is ATP synthase subunit beta, chloroplastic from Pylaiella littoralis (Seaweed).